The chain runs to 1578 residues: Mediator of RNA polymerase II transcription subunit 14 (1578 aa).

Residues 49 to 53 (LAELL) carry the LXXLL motif 1 motif. The segment at 561-582 (SQSVTAGGTSQSSAPSAATTES) is disordered. Residues 565–580 (TAGGTSQSSAPSAATT) show a composition bias toward low complexity. An LXXLL motif 2 motif is present at residues 739–743 (LKRLL). Disordered regions lie at residues 1009–1173 (RRRS…PDHK) and 1510–1578 (APGG…GGPN). Polar residues predominate over residues 1084 to 1093 (SQSHPNFNMT). Pro residues-rich tracts occupy residues 1095-1104 (PPAPHMPHPS) and 1157-1167 (PGMPRPSPRPG). Composition is skewed to gly residues over residues 1510–1521 (APGGPGGPGPMG) and 1547–1578 (MGGGGQQSNYGGMVGGGAQSGVPGGPGAGGPN).

The protein belongs to the Mediator complex subunit 14 family. Component of the Mediator complex.

It localises to the nucleus. Functionally, component of the Mediator complex, a coactivator involved in the regulated transcription of nearly all RNA polymerase II-dependent genes. Mediator functions as a bridge to convey information from gene-specific regulatory proteins to the basal RNA polymerase II transcription machinery. Mediator is recruited to promoters by direct interactions with regulatory proteins and serves as a scaffold for the assembly of a functional preinitiation complex with RNA polymerase II and the general transcription factors. This is Mediator of RNA polymerase II transcription subunit 14 (MED14) from Aedes aegypti (Yellowfever mosquito).